The primary structure comprises 370 residues: Galactose-1-phosphate uridylyltransferase (370 aa).

The Zn(2+) site is built by Cys-51 and Cys-54. UDP-alpha-D-glucose contacts are provided by residues Ala-60 and 76-77 (NG). Residue His-121 coordinates Zn(2+). UDP-alpha-D-glucose is bound at residue Asn-166. His-177 contributes to the Zn(2+) binding site. The Tele-UMP-histidine intermediate role is filled by His-179. Gln-181 serves as a coordination point for UDP-alpha-D-glucose. Glu-195, His-294, His-311, and His-313 together coordinate Fe cation. Residues 326-329 (KFLV) and 331-332 (FE) contribute to the UDP-alpha-D-glucose site.

Belongs to the galactose-1-phosphate uridylyltransferase type 1 family. In terms of assembly, homodimer. The cofactor is Zn(2+).

The enzyme catalyses alpha-D-galactose 1-phosphate + UDP-alpha-D-glucose = alpha-D-glucose 1-phosphate + UDP-alpha-D-galactose. Its pathway is carbohydrate metabolism; galactose metabolism. In Kluyveromyces lactis (strain ATCC 8585 / CBS 2359 / DSM 70799 / NBRC 1267 / NRRL Y-1140 / WM37) (Yeast), this protein is Galactose-1-phosphate uridylyltransferase (GAL7).